Here is a 459-residue protein sequence, read N- to C-terminus: Alpha,alpha-trehalose-phosphate synthase [UDP-forming] (459 aa).

2 residues coordinate D-glucose 6-phosphate: Tyr86 and Asp140. UDP contacts are provided by Arg262 and Lys267. UDP-alpha-D-glucose-binding residues include Arg262 and Lys267. Residue Arg300 participates in D-glucose 6-phosphate binding. Residue 361 to 369 coordinates UDP-alpha-D-glucose; the sequence is DGMNLVALE. 365 to 369 provides a ligand contact to UDP; that stretch reads LVALE.

Belongs to the glycosyltransferase 20 family. Component of the trehalose synthase complex.

The protein localises to the cytoplasm. The catalysed reaction is D-glucose 6-phosphate + UDP-alpha-D-glucose = alpha,alpha-trehalose 6-phosphate + UDP + H(+). In terms of biological role, synthase catalytic subunit of the trehalose synthase complex that catalyzes the production of trehalose from glucose-6-phosphate and UDP-alpha-D-glucose in a two step process. Can function independently of the complex. The protein is Alpha,alpha-trehalose-phosphate synthase [UDP-forming] (TPS1) of Encephalitozoon cuniculi (strain GB-M1) (Microsporidian parasite).